A 184-amino-acid chain; its full sequence is MGLEEKLPSGFVLTTVEQAAGWVRKSSVFPATFGLACCAIEMMTTGAGRYDLARFGMEVFRGSPRQADLMIVAGRVSQKMAPVLRQVYDQMPNPKWVISMGVCASSGGMFNNYAIVQGVDHIVPVDIYLPGCPPRPEMLLDAILKLHQKIQTSKLGVNAEEAAREAEEAALKALPLIEMKGLLR.

4 residues coordinate [4Fe-4S] cluster: C37, C38, C103, and C132.

The protein belongs to the complex I 20 kDa subunit family. In terms of assembly, NDH-1 is composed of 14 different subunits. Subunits NuoB, C, D, E, F, and G constitute the peripheral sector of the complex. Requires [4Fe-4S] cluster as cofactor.

Its subcellular location is the cell membrane. The catalysed reaction is a quinone + NADH + 5 H(+)(in) = a quinol + NAD(+) + 4 H(+)(out). Its function is as follows. NDH-1 shuttles electrons from NADH, via FMN and iron-sulfur (Fe-S) centers, to quinones in the respiratory chain. The immediate electron acceptor for the enzyme in this species is believed to be a menaquinone. Couples the redox reaction to proton translocation (for every two electrons transferred, four hydrogen ions are translocated across the cytoplasmic membrane), and thus conserves the redox energy in a proton gradient. This chain is NADH-quinone oxidoreductase subunit B 1, found in Streptomyces griseus subsp. griseus (strain JCM 4626 / CBS 651.72 / NBRC 13350 / KCC S-0626 / ISP 5235).